Consider the following 251-residue polypeptide: Hydroxyacylglutathione hydrolase (251 aa).

The Zn(2+) site is built by His53, His55, Asp57, His58, His110, Asp127, and His165.

Belongs to the metallo-beta-lactamase superfamily. Glyoxalase II family. Monomer. Zn(2+) serves as cofactor.

The catalysed reaction is an S-(2-hydroxyacyl)glutathione + H2O = a 2-hydroxy carboxylate + glutathione + H(+). The protein operates within secondary metabolite metabolism; methylglyoxal degradation; (R)-lactate from methylglyoxal: step 2/2. Its function is as follows. Thiolesterase that catalyzes the hydrolysis of S-D-lactoyl-glutathione to form glutathione and D-lactic acid. This is Hydroxyacylglutathione hydrolase from Serratia proteamaculans (strain 568).